The following is a 79-amino-acid chain: Hemoglobin subunit zeta (79 aa).

Serine 1 carries the post-translational modification N-acetylserine. Residues 1–79 form the Globin domain; it reads SLTKTXXTII…FKLLSHXFLV (79 aa). Serine 38 and serine 53 each carry phosphoserine. Histidine 59 lines the heme b pocket.

It belongs to the globin family. In terms of assembly, heterotetramer of two zeta chains and two epsilon chains.

Its function is as follows. The zeta chain is an alpha-type chain of mammalian embryonic hemoglobin. This Notamacropus eugenii (Tammar wallaby) protein is Hemoglobin subunit zeta.